Reading from the N-terminus, the 316-residue chain is Endochitinase WIN8 (316 aa).

Residues 1 to 23 (MRFWALTVLSLLLSLLLGVSSDT) form the signal peptide. The 41-residue stretch at 24–64 (AQCGSQAGNATCPNDLCCSSGGYCGLTVAYCCAGCVSQCRN) folds into the Chitin-binding type-1 domain. 7 disulfides stabilise this stretch: C26–C41, C35–C47, C40–C54, C58–C62, C84–C146, C158–C168, and C266–C298. The active-site Proton donor is E128.

It belongs to the glycosyl hydrolase 19 family. Chitinase class I subfamily.

The catalysed reaction is Random endo-hydrolysis of N-acetyl-beta-D-glucosaminide (1-&gt;4)-beta-linkages in chitin and chitodextrins.. Its function is as follows. Defense against chitin-containing fungal pathogens. In Populus trichocarpa (Western balsam poplar), this protein is Endochitinase WIN8 (WIN8).